We begin with the raw amino-acid sequence, 277 residues long: MSSKSQLTYTARASKHPNALAKRLFEIAEAKKTNVTVSADVTTTKELLDLADRLGPYIAVIKTHIDILSDFSDETIEGLKALAQKHNFLIFEDRKFIDIGNTVQKQYHRGTLRISEWAHIINCSILPGEGIVEALAQTASAPDFGYGPERGLLILAEMTSKGSLATGQYTTSSVDYARKYKNFVMGFVSTRSLGEVQSEVSSPSDEEDFVVFTTGVNISSKGDKLGQQYQTPASAIGRGADFIIAGRGIYAAPDPVQAAQQYQKEGWEAYLARVGGN.

Residues aspartate 40, 62–64, 93–102, tyrosine 229, and arginine 247 contribute to the substrate site; these read KTH and DRKFIDIGNT. Lysine 95 serves as the catalytic Proton donor.

This sequence belongs to the OMP decarboxylase family.

The enzyme catalyses orotidine 5'-phosphate + H(+) = UMP + CO2. The protein operates within pyrimidine metabolism; UMP biosynthesis via de novo pathway; UMP from orotate: step 2/2. This Aspergillus awamori (Black koji mold) protein is Orotidine 5'-phosphate decarboxylase (pyrG).